Here is a 270-residue protein sequence, read N- to C-terminus: Phosphonoacetaldehyde hydrolase (270 aa).

Asp-11 acts as the Nucleophile in catalysis. 2 residues coordinate Mg(2+): Asp-11 and Ala-13. Lys-53 serves as the catalytic Schiff-base intermediate with substrate. Asp-187 contributes to the Mg(2+) binding site.

Belongs to the HAD-like hydrolase superfamily. PhnX family. In terms of assembly, homodimer. Requires Mg(2+) as cofactor.

It carries out the reaction phosphonoacetaldehyde + H2O = acetaldehyde + phosphate + H(+). In terms of biological role, involved in phosphonate degradation. The chain is Phosphonoacetaldehyde hydrolase from Salmonella choleraesuis (strain SC-B67).